Here is a 484-residue protein sequence, read N- to C-terminus: Sucrose-6-phosphate hydrolase (484 aa).

Substrate-binding positions include 48 to 51, Gln67, 110 to 111, 168 to 169, and Glu223; these read LLND, YS, and RD. Asp51 is a catalytic residue.

Belongs to the glycosyl hydrolase 32 family.

The protein resides in the cytoplasm. The enzyme catalyses Hydrolysis of terminal non-reducing beta-D-fructofuranoside residues in beta-D-fructofuranosides.. Its pathway is glycan biosynthesis; sucrose metabolism. Functionally, enables the bacterium to metabolize sucrose as a sole carbon source. The protein is Sucrose-6-phosphate hydrolase (scrB) of Vibrio alginolyticus.